The following is a 207-amino-acid chain: Superoxide dismutase [Mn] (207 aa).

Residues histidine 28, histidine 76, aspartate 160, and histidine 164 each contribute to the Mn(2+) site.

The protein belongs to the iron/manganese superoxide dismutase family. Mn(2+) serves as cofactor.

It catalyses the reaction 2 superoxide + 2 H(+) = H2O2 + O2. In terms of biological role, destroys superoxide anion radicals which are normally produced within the cells and which are toxic to biological systems. The polypeptide is Superoxide dismutase [Mn] (sodA) (Mycolicibacterium fortuitum (Mycobacterium fortuitum)).